Reading from the N-terminus, the 290-residue chain is Type II secretion system protein C (290 aa).

Residues 1 to 28 (MTLPFRNDLLSSLLARCKTVPLSRFSQP) are Cytoplasmic-facing. The helical transmembrane segment at 29 to 46 (LFWLLLLLLAHQCAGLTW) threads the bilayer. Residues 47–290 (RLLDLGSQQA…LYDVYVGLSE (244 aa)) are Periplasmic-facing.

Belongs to the GSP C family.

Its subcellular location is the cell inner membrane. Involved in a type II secretion system (T2SS, formerly general secretion pathway, GSP) for the export of proteins. The polypeptide is Type II secretion system protein C (exeC) (Aeromonas hydrophila).